The following is a 957-amino-acid chain: Sorting nexin-13 (957 aa).

Residues alanine 97 to asparagine 284 enclose the PXA domain. An RGS domain is found at proline 373–arginine 511. Residues valine 559–lysine 680 enclose the PX domain. Positions 601, 603, 628, and 642 each coordinate a 1,2-diacyl-sn-glycero-3-phospho-(1D-myo-inositol-3-phosphate).

This sequence belongs to the sorting nexin family.

The protein localises to the early endosome membrane. May be involved in several stages of intracellular trafficking. Acts as a GAP for Galphas. May play a role in endosome homeostasis. The chain is Sorting nexin-13 (Snx13) from Mus musculus (Mouse).